The sequence spans 354 residues: Guanine nucleotide-binding protein G(o) subunit alpha (354 aa).

Gly-2 carries N-myristoyl glycine lipidation. A lipid anchor (S-palmitoyl cysteine) is attached at Cys-3. Positions 32–354 constitute a G-alpha domain; it reads KDVKLLLLGA…AYNLRGCGLY (323 aa). Positions 35-48 are G1 motif; sequence KLLLLGAGESGKST. Positions 43, 46, 47, 48, 152, 176, 177, 178, and 179 each coordinate GTP. Ser-47 is a binding site for Mg(2+). Residues 174–182 are G2 motif; it reads DILRTRVKT. Thr-182 provides a ligand contact to Mg(2+). The segment at 197-206 is G3 motif; sequence FRLFDVGGQR. A G4 motif region spans residues 266–273; the sequence is ILFLNKKD. GTP contacts are provided by Asn-270, Asp-273, and Cys-325. A G5 motif region spans residues 324 to 329; the sequence is TCATDT.

Belongs to the G-alpha family. G(i/o/t/z) subfamily. In terms of assembly, g proteins are composed of 3 units; alpha, beta and gamma.

It carries out the reaction GTP + H2O = GDP + phosphate + H(+). Guanine nucleotide-binding proteins (G proteins) function as transducers downstream of G protein-coupled receptors (GPCRs) in numerous signaling cascades. The alpha chain contains the guanine nucleotide binding site and alternates between an active, GTP-bound state and an inactive, GDP-bound state. Signaling by an activated GPCR promotes GDP release and GTP binding. The alpha subunit has a low GTPase activity that converts bound GTP to GDP, thereby terminating the signal. Both GDP release and GTP hydrolysis are modulated by numerous regulatory proteins. Signaling is mediated via effector proteins, such as adenylate cyclase. Inhibits adenylate cyclase activity, leading to decreased intracellular cAMP levels. The polypeptide is Guanine nucleotide-binding protein G(o) subunit alpha (gna0) (Xenopus laevis (African clawed frog)).